The chain runs to 1407 residues: DNA-directed RNA polymerase subunit beta' (1407 aa).

The Zn(2+) site is built by C70, C72, C85, and C88. Positions 460, 462, and 464 each coordinate Mg(2+). Residues C814, C888, C895, and C898 each contribute to the Zn(2+) site.

It belongs to the RNA polymerase beta' chain family. As to quaternary structure, the RNAP catalytic core consists of 2 alpha, 1 beta, 1 beta' and 1 omega subunit. When a sigma factor is associated with the core the holoenzyme is formed, which can initiate transcription. Mg(2+) serves as cofactor. Requires Zn(2+) as cofactor.

The catalysed reaction is RNA(n) + a ribonucleoside 5'-triphosphate = RNA(n+1) + diphosphate. In terms of biological role, DNA-dependent RNA polymerase catalyzes the transcription of DNA into RNA using the four ribonucleoside triphosphates as substrates. The protein is DNA-directed RNA polymerase subunit beta' of Salmonella paratyphi B (strain ATCC BAA-1250 / SPB7).